Here is a 508-residue protein sequence, read N- to C-terminus: Matrix metalloproteinase-19 (508 aa).

An N-terminal signal peptide occupies residues 1–18 (MNCQQLWLGFLLPMTVSG). Residues 19 to 97 (RVLGLAEVAP…EDPFNQKTLK (79 aa)) constitute a propeptide that is removed on maturation. The Cysteine switch motif lies at 83–90 (PRCGLEDP). Residues Cys-85 and His-212 each contribute to the Zn(2+) site. Glu-213 is a catalytic residue. His-216 and His-222 together coordinate Zn(2+). Residues 262 to 288 (IRDEEEEETELPTVPPVPTEPSPMPDP) form a disordered region. Residues 274 to 287 (TVPPVPTEPSPMPD) are compositionally biased toward pro residues. Hemopexin repeat units follow at residues 286–333 (PDPC…WEGL), 334–380 (PGNL…EPNL), 381–425 (DAAL…FTGV), and 426–472 (PNQP…WMHC). A disulfide bridge connects residues Cys-289 and Cys-472. The N-linked (GlcNAc...) asparagine glycan is linked to Asn-464.

This sequence belongs to the peptidase M10A family. Zn(2+) is required as a cofactor. The cofactor is Ca(2+). In terms of processing, activated by autolytic cleavage after Lys-97. Post-translationally, tyrosine phosphorylated by PKDCC/VLK. As to expression, expressed in mammary gland, placenta, lung, pancreas, ovary, small intestine, spleen, thymus, prostate, testis colon, heart and blood vessel walls. Not detected in brain and peripheral blood leukocytes. Also expressed in the synovial fluid of normal and rheumatoid patients.

Its subcellular location is the secreted. The protein resides in the extracellular space. It is found in the extracellular matrix. With respect to regulation, strongly inhibited by TIMP-2, TIMP-3 and TIMP-4, while TIMP-1 is less efficient. Endopeptidase that degrades various components of the extracellular matrix, such as aggrecan and cartilage oligomeric matrix protein (comp), during development, haemostasis and pathological conditions (arthritic disease). May also play a role in neovascularization or angiogenesis. Hydrolyzes collagen type IV, laminin, nidogen, nascin-C isoform, fibronectin, and type I gelatin. In Homo sapiens (Human), this protein is Matrix metalloproteinase-19 (MMP19).